The sequence spans 423 residues: Growth hormone-releasing hormone receptor (423 aa).

The first 22 residues, 1–22 (MDGLMWATRILCLLSLCGVTLG), serve as a signal peptide directing secretion. Residues 23–130 (HLHLECDFIT…KEKSYFSTVK (108 aa)) are Extracellular-facing. 3 disulfide bridges follow: Cys-41/Cys-64, Cys-55/Cys-96, and Cys-78/Cys-112. Residues Asn-49 and Asn-50 are each glycosylated (N-linked (GlcNAc...) asparagine). Residues 131-151 (IIYTTGHSISIVALCVAIAIL) form a helical membrane-spanning segment. Over 152–167 (VALRRLHCPRNYIHTQ) the chain is Cytoplasmic. The helical transmembrane segment at 168–188 (LFATFILKASAVFLKDAAIFQ) threads the bilayer. Residues 189–210 (GDSTDHCSMSTVLCKVSVAISH) are Extracellular-facing. The chain crosses the membrane as a helical span at residues 211–231 (LATMTNFSWLLAEAVYLSCLL). The Cytoplasmic portion of the chain corresponds to 232 to 240 (ASTSPRSKP). The chain crosses the membrane as a helical span at residues 241 to 261 (AFWWLVLAGWGLPVLCTGTWV). The Extracellular portion of the chain corresponds to 262-283 (GCKLAFEDTECWDLDNSSPCWW). A helical transmembrane segment spans residues 284-304 (IIKGPIVLSVGVNFGLFLNII). Topologically, residues 305 to 331 (CILLRKLEPAQGGLHTRAQYWRLSKST) are cytoplasmic. Residues 332-352 (LLLIPLFGIHYIIFNFLPDSA) traverse the membrane as a helical segment. Topologically, residues 353-357 (GLDIR) are extracellular. A helical membrane pass occupies residues 358–378 (VPLELGLGSFQGFIVAVLYCF). Residues 379-423 (LNQEVRTEISRKWYGHDPELLPARRTCTEWTTPPRSRLKVLTSEC) lie on the Cytoplasmic side of the membrane.

Belongs to the G-protein coupled receptor 2 family. Pituitary gland.

It localises to the cell membrane. Functionally, receptor for GRF, coupled to G proteins which activate adenylyl cyclase. Stimulates somatotroph cell growth, growth hormone gene transcription and growth hormone secretion. The chain is Growth hormone-releasing hormone receptor (Ghrhr) from Mus musculus (Mouse).